A 493-amino-acid polypeptide reads, in one-letter code: Guanosine-5'-triphosphate,3'-diphosphate pyrophosphatase (493 aa).

The protein belongs to the GppA/Ppx family. GppA subfamily.

It carries out the reaction guanosine 3'-diphosphate 5'-triphosphate + H2O = guanosine 3',5'-bis(diphosphate) + phosphate + H(+). It participates in purine metabolism; ppGpp biosynthesis; ppGpp from GTP: step 2/2. Its function is as follows. Catalyzes the conversion of pppGpp to ppGpp. Guanosine pentaphosphate (pppGpp) is a cytoplasmic signaling molecule which together with ppGpp controls the 'stringent response', an adaptive process that allows bacteria to respond to amino acid starvation, resulting in the coordinated regulation of numerous cellular activities. The sequence is that of Guanosine-5'-triphosphate,3'-diphosphate pyrophosphatase from Salmonella dublin (strain CT_02021853).